We begin with the raw amino-acid sequence, 350 residues long: N(4)-bis(aminopropyl)spermidine synthase (350 aa).

The protein belongs to the branched-chain polyamine synthase family.

It localises to the cytoplasm. It catalyses the reaction 2 S-adenosyl 3-(methylsulfanyl)propylamine + spermidine = N(4)-bis(aminopropyl)spermidine + 2 S-methyl-5'-thioadenosine + 2 H(+). It participates in amine and polyamine biosynthesis. Functionally, involved in the biosynthesis of branched-chain polyamines, which support the growth of thermophiles under high-temperature conditions. Catalyzes the sequential condensation of spermidine with the aminopropyl groups of decarboxylated S-adenosylmethionines to produce N(4)-bis(aminopropyl)spermidine via N(4)-aminopropylspermidine. The protein is N(4)-bis(aminopropyl)spermidine synthase of Methanocaldococcus jannaschii (strain ATCC 43067 / DSM 2661 / JAL-1 / JCM 10045 / NBRC 100440) (Methanococcus jannaschii).